The primary structure comprises 328 residues: 4-hydroxythreonine-4-phosphate dehydrogenase (328 aa).

Positions 133 and 134 each coordinate substrate. The a divalent metal cation site is built by histidine 163, histidine 208, and histidine 263. Residues lysine 271, asparagine 280, and arginine 289 each contribute to the substrate site.

It belongs to the PdxA family. As to quaternary structure, homodimer. Zn(2+) is required as a cofactor. Requires Mg(2+) as cofactor. Co(2+) serves as cofactor.

Its subcellular location is the cytoplasm. The enzyme catalyses 4-(phosphooxy)-L-threonine + NAD(+) = 3-amino-2-oxopropyl phosphate + CO2 + NADH. The protein operates within cofactor biosynthesis; pyridoxine 5'-phosphate biosynthesis; pyridoxine 5'-phosphate from D-erythrose 4-phosphate: step 4/5. Catalyzes the NAD(P)-dependent oxidation of 4-(phosphooxy)-L-threonine (HTP) into 2-amino-3-oxo-4-(phosphooxy)butyric acid which spontaneously decarboxylates to form 3-amino-2-oxopropyl phosphate (AHAP). The polypeptide is 4-hydroxythreonine-4-phosphate dehydrogenase (Chromobacterium violaceum (strain ATCC 12472 / DSM 30191 / JCM 1249 / CCUG 213 / NBRC 12614 / NCIMB 9131 / NCTC 9757 / MK)).